Consider the following 534-residue polypeptide: (E)-beta-farnesene synthase (534 aa).

The Mg(2+) site is built by Asp287, Asp291, Asn431, Ser435, and Glu439. Residues Asp287–Asp291 carry the DDXXD motif motif.

It belongs to the terpene synthase family. Mg(2+) is required as a cofactor. It depends on Co(2+) as a cofactor. The cofactor is Mn(2+).

Its subcellular location is the cytoplasm. The enzyme catalyses (2E,6E)-farnesyl diphosphate = (E)-beta-farnesene + diphosphate. Its pathway is secondary metabolite biosynthesis; terpenoid biosynthesis. In terms of biological role, sesquiterpene cyclase catalyzing the production of beta-farnesene and alpha-bergamotene in equal amounts from farnesyl diphosphate. Involved in indirect defense by producing volatile signals attracting natural enemies of herbivores. The chain is (E)-beta-farnesene synthase from Zea mays subsp. mexicana (Mexican teosinte).